Consider the following 201-residue polypeptide: Large ribosomal subunit protein uL4 (201 aa).

Positions 39 to 70 (GRQGTKAQKTRSEVSGGGKKPWRQKGTGRARA) are disordered.

The protein belongs to the universal ribosomal protein uL4 family. In terms of assembly, part of the 50S ribosomal subunit.

Functionally, one of the primary rRNA binding proteins, this protein initially binds near the 5'-end of the 23S rRNA. It is important during the early stages of 50S assembly. It makes multiple contacts with different domains of the 23S rRNA in the assembled 50S subunit and ribosome. In terms of biological role, forms part of the polypeptide exit tunnel. This Marinobacter nauticus (strain ATCC 700491 / DSM 11845 / VT8) (Marinobacter aquaeolei) protein is Large ribosomal subunit protein uL4.